A 192-amino-acid chain; its full sequence is Succinate dehydrogenase cytochrome b560 subunit, mitochondrial (192 aa).

The N-terminal 27 residues, 1-27 (MFGRTLNTFTSRNAPLVRNFDKFIVNN), are a transit peptide targeting the mitochondrion. Residues 48–83 (YSTQAKKPFTITEKRIDELKTPYQPTSPHLTIYKFP) lie on the Mitochondrial matrix side of the membrane. The helical transmembrane segment at 84–113 (LPAVMSIMHRATGICLALGITGLAGVTLFA) threads the bilayer. The Mitochondrial intermembrane portion of the chain corresponds to 114–131 (PHDAIHYIQLLHTQYPAL). Residues 132-156 (VYPAKFAVALPLTYHFCTGVRHIIW) form a helical membrane-spanning segment. Residue His-146 coordinates heme b. Over 157 to 164 (DETVKGLS) the chain is Mitochondrial matrix. Residues 165–186 (ISQIESSGKVLLAVVAVLSTIF) traverse the membrane as a helical segment. At 187 to 189 (TFV) the chain is on the mitochondrial intermembrane side.

It belongs to the cytochrome b560 family. As to quaternary structure, component of complex II composed of four subunits: the flavoprotein (FP) sdha, iron-sulfur protein (IP) sdhb, and a cytochrome b560 composed of sdhc and sdhd. The cofactor is heme b.

The protein resides in the mitochondrion inner membrane. Its pathway is carbohydrate metabolism; tricarboxylic acid cycle. In terms of biological role, membrane-anchoring subunit of succinate dehydrogenase (SDH) that is involved in complex II of the mitochondrial electron transport chain and is responsible for transferring electrons from succinate to ubiquinone (coenzyme Q). In Dictyostelium discoideum (Social amoeba), this protein is Succinate dehydrogenase cytochrome b560 subunit, mitochondrial (sdhC).